The primary structure comprises 343 residues: Ketol-acid reductoisomerase (NADP(+)) (343 aa).

Residues 7 to 186 (TTVYYDEDAD…GCTRAGVIET (180 aa)) form the KARI N-terminal Rossmann domain. NADP(+) contacts are provided by residues 30–33 (YGSQ), Arg53, Ser56, Ser58, and 88–91 (DTIQ). His112 is a catalytic residue. Gly138 lines the NADP(+) pocket. The KARI C-terminal knotted domain maps to 187-329 (SFQEEVETDL…ENLRELFAWG (143 aa)). Positions 195, 199, 231, and 235 each coordinate Mg(2+). Substrate is bound at residue Ser256.

Belongs to the ketol-acid reductoisomerase family. The cofactor is Mg(2+).

It carries out the reaction (2R)-2,3-dihydroxy-3-methylbutanoate + NADP(+) = (2S)-2-acetolactate + NADPH + H(+). It catalyses the reaction (2R,3R)-2,3-dihydroxy-3-methylpentanoate + NADP(+) = (S)-2-ethyl-2-hydroxy-3-oxobutanoate + NADPH + H(+). Its pathway is amino-acid biosynthesis; L-isoleucine biosynthesis; L-isoleucine from 2-oxobutanoate: step 2/4. It functions in the pathway amino-acid biosynthesis; L-valine biosynthesis; L-valine from pyruvate: step 2/4. Involved in the biosynthesis of branched-chain amino acids (BCAA). Catalyzes an alkyl-migration followed by a ketol-acid reduction of (S)-2-acetolactate (S2AL) to yield (R)-2,3-dihydroxy-isovalerate. In the isomerase reaction, S2AL is rearranged via a Mg-dependent methyl migration to produce 3-hydroxy-3-methyl-2-ketobutyrate (HMKB). In the reductase reaction, this 2-ketoacid undergoes a metal-dependent reduction by NADPH to yield (R)-2,3-dihydroxy-isovalerate. In Haloarcula marismortui (strain ATCC 43049 / DSM 3752 / JCM 8966 / VKM B-1809) (Halobacterium marismortui), this protein is Ketol-acid reductoisomerase (NADP(+)).